Reading from the N-terminus, the 160-residue chain is Nucleotide-binding protein Smal_3487 (160 aa).

The protein belongs to the YajQ family.

Functionally, nucleotide-binding protein. This chain is Nucleotide-binding protein Smal_3487, found in Stenotrophomonas maltophilia (strain R551-3).